The primary structure comprises 1178 residues: Mannosyltransferase regulator 4 (1178 aa).

At M1 to R27 the chain is on the cytoplasmic side. The helical; Signal-anchor for type II membrane protein transmembrane segment at I28–P48 threads the bilayer. At Q49–N1178 the chain is on the lumenal side. The short motif at D519–D521 is the DXD element. The interval E1041–N1178 is disordered. 6 repeat units span residues K1042 to E1049, K1050 to E1057, K1058 to E1065, K1066 to E1073, K1074 to E1081, and K1082 to E1089. The interval K1042–E1174 is 17 X 8 AA tandem repeats of K-K-K-K-E-E-E-E. The 7; approximate repeat unit spans residues K1090–E1097. The stretch at K1098–E1105 is repeat 8. The stretch at K1106–E1113 is one 9; approximate repeat. The stretch at K1114–E1121 is one 10; approximate repeat. One copy of the 11; approximate repeat lies at N1122–E1129. The stretch at K1130–E1137 is repeat 12. A 13; approximate repeat occupies K1138–K1144. The 14; approximate repeat unit spans residues N1145–E1152. The 15; approximate repeat unit spans residues K1153 to E1160. The stretch at K1161–E1168 is one 16; approximate repeat. One copy of the 17; truncated repeat lies at K1169–E1174.

Belongs to the MNN4 family.

It localises to the golgi apparatus membrane. In terms of biological role, golgi apparatus protein involved in N-glycan mannosylphosphorylation. While MNN4 seems to have a regulatory role in N-glycan mannosylphosphorylation, a transferase activity of MNN4 can not be ruled out. Mediates mannosylphosphate transfer in both the core and outer chain portions of N-linked oligosaccharides. Has partially redundant function with MNN14. In Saccharomyces cerevisiae (strain ATCC 204508 / S288c) (Baker's yeast), this protein is Mannosyltransferase regulator 4.